Here is a 346-residue protein sequence, read N- to C-terminus: Protein MelA (346 aa).

2 VOC domains span residues 12–141 (GIEF…DFEA) and 155–305 (EVDH…IFTK). Residues H158, H237, and E314 each contribute to the Fe cation site.

This sequence belongs to the 4HPPD family. It depends on Fe cation as a cofactor.

Its subcellular location is the cytoplasm. It participates in pigment biosynthesis; melanin biosynthesis. The sequence is that of Protein MelA (melA) from Shewanella colwelliana (Alteromonas colwelliana).